The sequence spans 64 residues: Small cysteine-rich protein (64 aa).

An N-terminal signal peptide occupies residues F1 to T17. Residues P18 to E19 constitute a propeptide that is removed on maturation.

Post-translationally, contains 4 disulfide bonds.

Its subcellular location is the secreted. The protein localises to the nematocyst. In Anemonia viridis (Snakelocks anemone), this protein is Small cysteine-rich protein.